We begin with the raw amino-acid sequence, 188 residues long: NADH-quinone oxidoreductase subunit I (188 aa).

4Fe-4S ferredoxin-type domains lie at 44–74 (LNRYADGLEKCIGCELCAWACPADAIYVEGA) and 90–119 (QVYQINYLRCIGCGLCIEACPTRALTMTNE). [4Fe-4S] cluster contacts are provided by C54, C57, C60, C64, C99, C102, C105, and C109. Residues 167–188 (TGGAAAAAQDESEVDDTAGDRP) are disordered. Over residues 176–188 (DESEVDDTAGDRP) the composition is skewed to acidic residues.

This sequence belongs to the complex I 23 kDa subunit family. NDH-1 is composed of 14 different subunits. Subunits NuoA, H, J, K, L, M, N constitute the membrane sector of the complex. Requires [4Fe-4S] cluster as cofactor.

The protein resides in the cell membrane. It catalyses the reaction a quinone + NADH + 5 H(+)(in) = a quinol + NAD(+) + 4 H(+)(out). NDH-1 shuttles electrons from NADH, via FMN and iron-sulfur (Fe-S) centers, to quinones in the respiratory chain. The immediate electron acceptor for the enzyme in this species is believed to be ubiquinone. Couples the redox reaction to proton translocation (for every two electrons transferred, four hydrogen ions are translocated across the cytoplasmic membrane), and thus conserves the redox energy in a proton gradient. This chain is NADH-quinone oxidoreductase subunit I, found in Rhodococcus jostii (strain RHA1).